The following is a 1031-amino-acid chain: Formin-binding protein 4 (1031 aa).

Disordered stretches follow at residues 1 to 102 (MMGK…TTRP), 116 to 143 (AYAD…NQAT), and 166 to 205 (APVV…QTPG). Serine 19 is subject to Phosphoserine. 2 stretches are compositionally biased toward low complexity: residues 41 to 73 (DSTA…APED) and 83 to 92 (VVEVPNVVQN). Residues serine 120, serine 125, and serine 128 each carry the phosphoserine modification. Polar residues predominate over residues 134–143 (SKEANGNQAT). At threonine 176 the chain carries Phosphothreonine. Residues 190–203 (LSPTASNGSDTAQT) show a composition bias toward polar residues. Positions 218–252 (EIEMGDWQEVWDENTGCYYYWNTQTNEVTWELPQY) constitute a WW 1 domain. Lysine 294 is subject to N6-acetyllysine. Lysine 305 participates in a covalent cross-link: Glycyl lysine isopeptide (Lys-Gly) (interchain with G-Cter in SUMO1). Lysine 339 participates in a covalent cross-link: Glycyl lysine isopeptide (Lys-Gly) (interchain with G-Cter in SUMO2). A Glycyl lysine isopeptide (Lys-Gly) (interchain with G-Cter in SUMO1); alternate cross-link involves residue lysine 352. Lysine 352 is covalently cross-linked (Glycyl lysine isopeptide (Lys-Gly) (interchain with G-Cter in SUMO2); alternate). The segment at 355–518 (DPVSETKETS…KETEVEESSE (164 aa)) is disordered. Residues 400–414 (ESEEEEEEEEQDTLE) show a composition bias toward acidic residues. Over residues 418–430 (ALERKKAELRALE) the composition is skewed to basic and acidic residues. A phosphoserine mark is found at serine 435, serine 440, serine 443, serine 446, and serine 450. Positions 436–450 (VSGSSPRSDISQPAS) are enriched in polar residues. The segment covering 457–466 (IMSKRGKWKM) has biased composition (basic residues). A compositionally biased stretch (low complexity) spans 469–482 (RATSPESTSRSSSK). Phosphoserine occurs at positions 472, 507, and 516. Basic and acidic residues predominate over residues 499–518 (DSEKIDEISDKETEVEESSE). Lysine 527 participates in a covalent cross-link: Glycyl lysine isopeptide (Lys-Gly) (interchain with G-Cter in SUMO1); alternate. Lysine 527 participates in a covalent cross-link: Glycyl lysine isopeptide (Lys-Gly) (interchain with G-Cter in SUMO2); alternate. In terms of domain architecture, WW 2 spans 603–637 (NATPKGWSCHWDRDHRRYFYVNEQSGESQWEFPDG). 3 disordered regions span residues 629–681 (ESQW…SLCK), 712–813 (PLPL…VQRS), and 900–994 (PAQA…RIEE). Over residues 643–663 (SQTKEVRDESLPKLTVKDKTC) the composition is skewed to basic and acidic residues. A compositionally biased stretch (polar residues) spans 664-677 (TDPNSTESSENPTG). Residues 712–741 (PLPLEMPPPPPPPPESPPPPPPPPPPPPPL) are compositionally biased toward pro residues. The span at 742–757 (EDGEIQEVEMEDEGSE) shows a compositional bias: acidic residues. The segment covering 771–794 (KPSTQTTAVTSQSLVDSTASSPPS) has biased composition (polar residues). A compositionally biased stretch (pro residues) spans 913–939 (VEPPPPPPPPPTPTPPPPPPAPKVPPP). A compositionally biased stretch (basic residues) spans 943-955 (RKGKKDKAKKSKT). A compositionally biased stretch (acidic residues) spans 971–984 (LDEEDNSSSSEEDR). Serine 977, serine 978, and serine 979 each carry phosphoserine. A compositionally biased stretch (basic and acidic residues) spans 985-994 (ESTAQKRIEE).

As to quaternary structure, binds FMN1. Interacts with the Arg/Gly-rich-flanked Pro-rich regions of KHDRBS1/SAM68. Arginine methylation in these regions has no effect on this binding. In terms of tissue distribution, ubiquitous. Highest levels in spleen and thymus.

This Mus musculus (Mouse) protein is Formin-binding protein 4 (Fnbp4).